A 738-amino-acid polypeptide reads, in one-letter code: NAD(P)H-quinone oxidoreductase subunit 5, chloroplastic (738 aa).

16 helical membrane-spanning segments follow: residues 9–29 (WIIPFVPLPVPMLIGVGLLLF), 40–60 (WAFPSILLLSIVMIFSINLSI), 89–109 (IDPLTSIMSMLITTVGIMVLI), 125–145 (FASMSFFSTSMLGLVTSSNLI), 147–167 (IYIFWELVGMCSYLLIGFWFT), 185–205 (GDFGLLLGILGFYWITGSFEF), 230–250 (AALLFTGAVAKSAQFPLHVWL), 258–278 (TPISALIHAATMVAAGIFLVA), 280–300 (LLPLFIVIPYIMNFISFIGII), 327–347 (LGYMMLALGMGSYRSALFHLI), 354–374 (ALLFLGSGSIIHSMETIVGYS), 396–416 (ISFLLGTLSLCGIPPLACFWS), 425–445 (WLYSPIFAIIAWSTAGLTAFY), 546–566 (LFPLLVLGILTLFVGSLGIPF), 603–623 (FSVSIAYFGIFIASFLYKPIY), and 718–738 (YLFFYLSCVSIFLLGLYFPVF).

Belongs to the complex I subunit 5 family. NDH is composed of at least 16 different subunits, 5 of which are encoded in the nucleus.

The protein resides in the plastid. It localises to the chloroplast thylakoid membrane. The enzyme catalyses a plastoquinone + NADH + (n+1) H(+)(in) = a plastoquinol + NAD(+) + n H(+)(out). It carries out the reaction a plastoquinone + NADPH + (n+1) H(+)(in) = a plastoquinol + NADP(+) + n H(+)(out). Functionally, NDH shuttles electrons from NAD(P)H:plastoquinone, via FMN and iron-sulfur (Fe-S) centers, to quinones in the photosynthetic chain and possibly in a chloroplast respiratory chain. The immediate electron acceptor for the enzyme in this species is believed to be plastoquinone. Couples the redox reaction to proton translocation, and thus conserves the redox energy in a proton gradient. The protein is NAD(P)H-quinone oxidoreductase subunit 5, chloroplastic (ndhF) of Ligustrum vulgare (Common privet).